Here is a 1358-residue protein sequence, read N- to C-terminus: Insulin-like growth factor 1 receptor (1358 aa).

Positions 1 to 25 (MKAELVPVCTAWILGLLLCLGPAAA) are cleaved as a signal peptide. Cysteines 28 and 47 form a disulfide. Asn74, Asn99, and Asn132 each carry an N-linked (GlcNAc...) asparagine glycan. Cystine bridges form between Cys147–Cys175, Cys179–Cys202, Cys189–Cys208, Cys212–Cys221, Cys216–Cys227, Cys228–Cys236, Cys232–Cys245, Cys248–Cys257, Cys261–Cys273, Cys279–Cys299, Cys303–Cys317, Cys320–Cys324, and Cys328–Cys347. Asn241 carries an N-linked (GlcNAc...) asparagine glycan. Asn310 carries N-linked (GlcNAc...) asparagine glycosylation. Asn411 and Asn432 each carry an N-linked (GlcNAc...) asparagine glycan. Cysteines 449 and 482 form a disulfide. Fibronectin type-III domains are found at residues 483 to 603 (ESHV…TDAA), 604 to 702 (VPSI…TEAE), 727 to 818 (PRPN…FVFA), and 829 to 924 (IPGI…LKPD). N-linked (GlcNAc...) asparagine glycosylation is found at Asn488, Asn528, Asn616, Asn634, and Asn669. The tract at residues 670–691 (GTIDTEGGTEPTKPEGSVGEKG) is disordered. The Extracellular segment spans residues 735–934 (DVLAVGNSTV…VRNNILQMVV (200 aa)). N-linked (GlcNAc...) asparagine glycans are attached at residues Asn741, Asn750, Asn758, Asn895, and Asn908. The chain crosses the membrane as a helical span at residues 935 to 955 (AIPLALSFLLVGIISIVCFVF). At 956–1358 (KKRNSNRLGN…ALPLPQSSAC (403 aa)) the chain is on the cytoplasmic side. The residue at position 976 (Tyr976) is a Phosphotyrosine; by autocatalysis. The region spanning 995-1270 (ITMNRELGQG…SIKDELDPGF (276 aa)) is the Protein kinase domain. Residues 1001–1009 (LGQGSFGMV) and Lys1029 contribute to the ATP site. Asp1131 acts as the Proton acceptor in catalysis. Phosphotyrosine; by autocatalysis is present on residues Tyr1157, Tyr1161, and Tyr1162. The segment at 1336-1358 (PYAHMNGGRKNERALPLPQSSAC) is disordered.

It belongs to the protein kinase superfamily. Tyr protein kinase family. Insulin receptor subfamily. Tetramer of 2 alpha and 2 beta chains linked by disulfide bonds. The alpha chains contribute to the formation of the ligand-binding domain, while the beta chain carries the kinase domain. Requires Mn(2+) as cofactor. The cytoplasmic domain of the beta subunit is autophosphorylated on Tyr residues in response to low concentrations of insulin-like growth factor (IGF1) and higher concentrations of insulin.

The protein localises to the cell membrane. The catalysed reaction is L-tyrosyl-[protein] + ATP = O-phospho-L-tyrosyl-[protein] + ADP + H(+). Its activity is regulated as follows. Autophosphorylation activates the kinase activity. This receptor binds insulin-like growth factor 1 (IGF1) with a high affinity and IGF2 with a lower affinity. It has a tyrosine-protein kinase activity, which is necessary for the activation of the IGF1-stimulated downstream signaling cascade. Plays a role in oocyte maturation. Promotes head development by inhibiting Wnt signaling during embryogenesis. This is Insulin-like growth factor 1 receptor (igf1r) from Xenopus laevis (African clawed frog).